Reading from the N-terminus, the 163-residue chain is Ribosome maturation factor RimM (163 aa).

Residues glutamate 90–leucine 161 enclose the PRC barrel domain.

This sequence belongs to the RimM family. Binds ribosomal protein uS19.

Its subcellular location is the cytoplasm. An accessory protein needed during the final step in the assembly of 30S ribosomal subunit, possibly for assembly of the head region. Essential for efficient processing of 16S rRNA. May be needed both before and after RbfA during the maturation of 16S rRNA. It has affinity for free ribosomal 30S subunits but not for 70S ribosomes. The protein is Ribosome maturation factor RimM of Anaeromyxobacter dehalogenans (strain 2CP-C).